The chain runs to 137 residues: Peptide methionine sulfoxide reductase MsrB (137 aa).

A MsrB domain is found at 7-129; it reads VDDLKENLSE…NSASLSFTDE (123 aa). Zn(2+) is bound by residues Cys-46, Cys-49, Cys-95, and Cys-98. Cys-118 acts as the Nucleophile in catalysis.

Belongs to the MsrB Met sulfoxide reductase family. Requires Zn(2+) as cofactor.

It carries out the reaction L-methionyl-[protein] + [thioredoxin]-disulfide + H2O = L-methionyl-(R)-S-oxide-[protein] + [thioredoxin]-dithiol. The sequence is that of Peptide methionine sulfoxide reductase MsrB from Escherichia fergusonii (strain ATCC 35469 / DSM 13698 / CCUG 18766 / IAM 14443 / JCM 21226 / LMG 7866 / NBRC 102419 / NCTC 12128 / CDC 0568-73).